Here is a 131-residue protein sequence, read N- to C-terminus: Profilin (131 aa).

This sequence belongs to the profilin family. As to quaternary structure, occurs in many kinds of cells as a complex with monomeric actin in a 1:1 ratio.

The protein localises to the cytoplasm. The protein resides in the cytoskeleton. Functionally, binds to actin and affects the structure of the cytoskeleton. At high concentrations, profilin prevents the polymerization of actin, whereas it enhances it at low concentrations. By binding to PIP2, it inhibits the formation of IP3 and DG. This Litchi chinensis (Lychee) protein is Profilin.